The primary structure comprises 96 residues: Protein Vpr (96 aa).

The tract at residues 1-42 (MEQAPEDQGPQREPHNEWTLELLEELKNEAVRHFPRIWLHGL) is homooligomerization. Ser79, Ser94, and Ser96 each carry phosphoserine; by host.

Belongs to the HIV-1 VPR protein family. As to quaternary structure, homooligomer, may form homodimer. Interacts with p6-gag region of the Pr55 Gag precursor protein through a (Leu-X-X)4 motif near the C-terminus of the P6gag protein. Interacts with host UNG. May interact with host RAD23A/HHR23A. Interacts with host VPRBP/DCAF1, leading to hijack the CUL4A-RBX1-DDB1-DCAF1/VPRBP complex, mediating ubiquitination of host proteins such as TERT and ZGPAT and arrest of the cell cycle in G2 phase. Phosphorylated on several residues by host. These phosphorylations regulate VPR activity for the nuclear import of the HIV-1 pre-integration complex.

It is found in the virion. The protein resides in the host nucleus. Its subcellular location is the host extracellular space. During virus entry, plays a role in the transport of the viral pre-integration (PIC) complex to the host nucleus. This function is crucial for viral infection of non-dividing macrophages. May act directly at the nuclear pore complex, by binding nucleoporins phenylalanine-glycine (FG)-repeat regions. Its function is as follows. During virus replication, may deplete host UNG protein, and incude G2-M cell cycle arrest. Acts by targeting specific host proteins for degradation by the 26S proteasome, through association with the cellular CUL4A-DDB1 E3 ligase complex by direct interaction with host VPRPB/DCAF-1. Cell cycle arrest reportedly occurs within hours of infection and is not blocked by antiviral agents, suggesting that it is initiated by the VPR carried into the virion. Additionally, VPR induces apoptosis in a cell cycle dependent manner suggesting that these two effects are mechanistically linked. Detected in the serum and cerebrospinal fluid of AIDS patient, VPR may also induce cell death to bystander cells. The protein is Protein Vpr of Human immunodeficiency virus type 1 group M subtype B (isolate BRU/LAI) (HIV-1).